Consider the following 130-residue polypeptide: Histone H2A type 1 (130 aa).

The tract at residues 1–22 is disordered; that stretch reads MSGRGKQGGKARAKAKSRSSRA. N-acetylserine is present on Ser2. Ser2 carries the post-translational modification Phosphoserine; by RPS6KA5. Arg4 is subject to Citrulline; alternate. Residue Arg4 is modified to Symmetric dimethylarginine; by PRMT5; alternate. Lys6 is subject to N6-(2-hydroxyisobutyryl)lysine. Residues 7–19 show a composition bias toward basic residues; the sequence is QGGKARAKAKSRS. Lys10 carries the post-translational modification N6-(2-hydroxyisobutyryl)lysine; alternate. Position 10 is an N6-lactoyllysine; alternate (Lys10). Lys10 is subject to N6-succinyllysine; alternate. Residues Lys14 and Lys16 each participate in a glycyl lysine isopeptide (Lys-Gly) (interchain with G-Cter in ubiquitin) cross-link. Residue Lys37 is modified to N6-(2-hydroxyisobutyryl)lysine; alternate. Lys37 carries the post-translational modification N6-(beta-hydroxybutyryl)lysine; alternate. Lys37 is subject to N6-crotonyllysine; alternate. 2 positions are modified to N6-(2-hydroxyisobutyryl)lysine: Lys75 and Lys76. Lys96 is subject to N6-(2-hydroxyisobutyryl)lysine; alternate. Position 96 is an N6-succinyllysine; alternate (Lys96). N6-glutaryllysine; alternate is present on Lys96. Position 100 is an N6-glutaryllysine (Lys100). Gln105 is subject to N5-methylglutamine. The residue at position 119 (Lys119) is an N6-(2-hydroxyisobutyryl)lysine; alternate. 2 positions are modified to N6-crotonyllysine; alternate: Lys119 and Lys120. Lys119 and Lys120 each carry N6-glutaryllysine; alternate. Lys120 participates in a covalent cross-link: Glycyl lysine isopeptide (Lys-Gly) (interchain with G-Cter in ubiquitin); alternate. Position 121 is a phosphothreonine; by DCAF1 (Thr121). Lys126 is subject to N6-crotonyllysine; alternate. Lys126 is modified (N6-glutaryllysine; alternate).

The protein belongs to the histone H2A family. In terms of assembly, the nucleosome is a histone octamer containing two molecules each of H2A, H2B, H3 and H4 assembled in one H3-H4 heterotetramer and two H2A-H2B heterodimers. The octamer wraps approximately 147 bp of DNA. Interacts with VRK1; the interaction is mediated by the nucleosome acidic patch, a cluster of negatively charged residues of H2A and H2B forming a cleft within the nucleosome core. Post-translationally, deiminated on Arg-4 in granulocytes upon calcium entry. Monoubiquitination of Lys-120 (H2AK119Ub) by RING1, TRIM37 and RNF2/RING2 complex gives a specific tag for epigenetic transcriptional repression and participates in X chromosome inactivation of female mammals. It is involved in the initiation of both imprinted and random X inactivation. Ubiquitinated H2A is enriched in inactive X chromosome chromatin. Ubiquitination of H2A functions downstream of methylation of 'Lys-27' of histone H3 (H3K27me). H2AK119Ub by RNF2/RING2 can also be induced by ultraviolet and may be involved in DNA repair. Following DNA double-strand breaks (DSBs), it is ubiquitinated through 'Lys-63' linkage of ubiquitin moieties by the E2 ligase UBE2N and the E3 ligases RNF8 and RNF168, leading to the recruitment of repair proteins to sites of DNA damage. Ubiquitination at Lys-14 and Lys-16 (H2AK13Ub and H2AK15Ub, respectively) in response to DNA damage is initiated by RNF168 that mediates monoubiquitination at these 2 sites, and 'Lys-63'-linked ubiquitin are then conjugated to monoubiquitin; RNF8 is able to extend 'Lys-63'-linked ubiquitin chains in vitro. H2AK119Ub and ionizing radiation-induced 'Lys-63'-linked ubiquitination (H2AK13Ub and H2AK15Ub) are distinct events. In terms of processing, phosphorylation on Ser-2 (H2AS1ph) is enhanced during mitosis. Phosphorylation on Ser-2 by RPS6KA5/MSK1 directly represses transcription. Acetylation of H3 inhibits Ser-2 phosphorylation by RPS6KA5/MSK1. Phosphorylation at Thr-121 (H2AT120ph) by DCAF1 is present in the regulatory region of many tumor suppresor genes and down-regulates their transcription. Post-translationally, symmetric dimethylation on Arg-4 by the PRDM1/PRMT5 complex may play a crucial role in the germ-cell lineage. Glutamine methylation at Gln-105 (H2AQ104me) by FBL is specifically dedicated to polymerase I. It is present at 35S ribosomal DNA locus and impairs binding of the FACT complex. In terms of processing, crotonylation (Kcr) is specifically present in male germ cells and marks testis-specific genes in post-meiotic cells, including X-linked genes that escape sex chromosome inactivation in haploid cells. Crotonylation marks active promoters and enhancers and confers resistance to transcriptional repressors. It is also associated with post-meiotically activated genes on autosomes. Post-translationally, lactylated in macrophages by EP300/P300 by using lactoyl-CoA directly derived from endogenous or exogenous lactate, leading to stimulates gene transcription.

Its subcellular location is the nucleus. The protein resides in the chromosome. Its function is as follows. Core component of nucleosome. Nucleosomes wrap and compact DNA into chromatin, limiting DNA accessibility to the cellular machineries which require DNA as a template. Histones thereby play a central role in transcription regulation, DNA repair, DNA replication and chromosomal stability. DNA accessibility is regulated via a complex set of post-translational modifications of histones, also called histone code, and nucleosome remodeling. This Rattus norvegicus (Rat) protein is Histone H2A type 1.